Here is a 158-residue protein sequence, read N- to C-terminus: Small ribosomal subunit protein uS7 (158 aa).

The protein belongs to the universal ribosomal protein uS7 family. Part of the 30S ribosomal subunit. Contacts proteins S9 and S11.

Functionally, one of the primary rRNA binding proteins, it binds directly to 16S rRNA where it nucleates assembly of the head domain of the 30S subunit. Is located at the subunit interface close to the decoding center, probably blocks exit of the E-site tRNA. The protein is Small ribosomal subunit protein uS7 of Wolbachia pipientis subsp. Culex pipiens (strain wPip).